A 399-amino-acid chain; its full sequence is Acetate kinase (399 aa).

A Mg(2+)-binding site is contributed by asparagine 7. An ATP-binding site is contributed by lysine 14. Substrate is bound at residue arginine 91. Catalysis depends on aspartate 148, which acts as the Proton donor/acceptor. ATP is bound by residues 208–212 (HLGNG) and 283–285 (DFR). Mg(2+) is bound at residue glutamate 384.

The protein belongs to the acetokinase family. Homodimer. Mg(2+) serves as cofactor. Requires Mn(2+) as cofactor.

Its subcellular location is the cytoplasm. It catalyses the reaction acetate + ATP = acetyl phosphate + ADP. It functions in the pathway metabolic intermediate biosynthesis; acetyl-CoA biosynthesis; acetyl-CoA from acetate: step 1/2. In terms of biological role, catalyzes the formation of acetyl phosphate from acetate and ATP. Can also catalyze the reverse reaction. The sequence is that of Acetate kinase from Dictyoglomus thermophilum (strain ATCC 35947 / DSM 3960 / H-6-12).